A 301-amino-acid polypeptide reads, in one-letter code: TLR adapter interacting with SLC15A4 on the lysosome (301 aa).

The pLxIS motif motif lies at 290 to 294 (SLHIS). Position 294 is a phosphoserine (serine 294).

As to quaternary structure, interacts (via pLxIS motif) with IRF5; leading to IRF5 activation. Interacts with SLC15A4; leading to its recruitment to endolysosome. The phosphorylated pLxIS motif constitutes an IRF5-binding motif, leading to recruitment of the transcription factor IRF5 to induce type-I interferons and other cytokines. As to expression, highly expressed in immune cell types such as B-cells, neutrophils, dendritic cells and monocytes, the expression levels are two-three-fold higher in female cells compared to male cells (at protein level). Expressed at low levels in T-cells and NK cells.

It localises to the lysosome membrane. The protein resides in the endosome membrane. Its subcellular location is the nucleus. The protein localises to the cytoplasm. Its function is as follows. Innate immune adapter that mediates the recruitment and activation of IRF5 downstream of endolysosomal toll-like receptors TLR7, TLR8 and TLR9. Following recruitment to endolysosome by SLC15A4 downstream of TLR7, TLR8 and TLR9, specifically recruits IRF5 transcription factor via its pLxIS motif, leading to IRF5 activation and subsequent expression of type I interferons. Plays a role in the regulation of endolysosomal pH in immune cells such as B-cells, dendritic cells and monocytes. The protein is TLR adapter interacting with SLC15A4 on the lysosome of Homo sapiens (Human).